The chain runs to 2090 residues: Nuclear pore complex protein Nup205 (2090 aa).

The protein belongs to the NUP186/NUP192/NUP205 family. Part of the nuclear pore complex (NPC).

It is found in the nucleus. The protein resides in the nuclear pore complex. In terms of biological role, plays a role in the nuclear pore complex (NPC) assembly and maintenance, but with limited role in NPC permeability. Required for specific nuclear import pathways such as Mad import. The chain is Nuclear pore complex protein Nup205 from Drosophila melanogaster (Fruit fly).